A 426-amino-acid polypeptide reads, in one-letter code: Histidine--tRNA ligase (426 aa).

The protein belongs to the class-II aminoacyl-tRNA synthetase family. In terms of assembly, homodimer.

The protein resides in the cytoplasm. It carries out the reaction tRNA(His) + L-histidine + ATP = L-histidyl-tRNA(His) + AMP + diphosphate + H(+). The polypeptide is Histidine--tRNA ligase (Shewanella baltica (strain OS195)).